The chain runs to 107 residues: Large ribosomal subunit protein eL33 (107 aa).

It belongs to the eukaryotic ribosomal protein eL33 family. In terms of assembly, component of the large ribosomal subunit. Mature ribosomes consist of a small (40S) and a large (60S) subunit. The 40S subunit contains about 32 different proteins and 1 molecule of RNA (18S). The 60S subunit contains 45 different proteins and 3 molecules of RNA (25S, 5.8S and 5S).

It is found in the cytoplasm. Component of the ribosome, a large ribonucleoprotein complex responsible for the synthesis of proteins in the cell. The small ribosomal subunit (SSU) binds messenger RNAs (mRNAs) and translates the encoded message by selecting cognate aminoacyl-transfer RNA (tRNA) molecules. The large subunit (LSU) contains the ribosomal catalytic site termed the peptidyl transferase center (PTC), which catalyzes the formation of peptide bonds, thereby polymerizing the amino acids delivered by tRNAs into a polypeptide chain. The nascent polypeptides leave the ribosome through a tunnel in the LSU and interact with protein factors that function in enzymatic processing, targeting, and the membrane insertion of nascent chains at the exit of the ribosomal tunnel. This chain is Large ribosomal subunit protein eL33, found in Candida albicans (strain SC5314 / ATCC MYA-2876) (Yeast).